A 216-amino-acid chain; its full sequence is Large ribosomal subunit protein bL21 (216 aa).

The protein belongs to the bacterial ribosomal protein bL21 family. In terms of assembly, part of the 50S ribosomal subunit. Contacts protein L20.

This protein binds to 23S rRNA in the presence of protein L20. This chain is Large ribosomal subunit protein bL21, found in Roseobacter denitrificans (strain ATCC 33942 / OCh 114) (Erythrobacter sp. (strain OCh 114)).